The primary structure comprises 276 residues: tRNA (guanine-N(7)-)-methyltransferase (276 aa).

The disordered stretch occupies residues 1-23; that stretch reads MRPDPAPLDPTDASPAQARRHQP. Glutamate 103, glutamate 128, aspartate 155, and aspartate 178 together coordinate S-adenosyl-L-methionine. The active site involves aspartate 178. Residues lysine 182, aspartate 214, and 252 to 255 each bind substrate; that span reads TRYE.

It belongs to the class I-like SAM-binding methyltransferase superfamily. TrmB family.

The catalysed reaction is guanosine(46) in tRNA + S-adenosyl-L-methionine = N(7)-methylguanosine(46) in tRNA + S-adenosyl-L-homocysteine. It functions in the pathway tRNA modification; N(7)-methylguanine-tRNA biosynthesis. Its function is as follows. Catalyzes the formation of N(7)-methylguanine at position 46 (m7G46) in tRNA. The protein is tRNA (guanine-N(7)-)-methyltransferase of Cutibacterium acnes (strain DSM 16379 / KPA171202) (Propionibacterium acnes).